Reading from the N-terminus, the 59-residue chain is Large ribosomal subunit protein uL30 (59 aa).

The protein belongs to the universal ribosomal protein uL30 family. As to quaternary structure, part of the 50S ribosomal subunit.

In Persephonella marina (strain DSM 14350 / EX-H1), this protein is Large ribosomal subunit protein uL30.